A 490-amino-acid polypeptide reads, in one-letter code: Cardiolipin synthase 1 (490 aa).

A run of 2 helical transmembrane segments spans residues 9–29 (ILTILLVVGFITNVVLAFVII) and 42–62 (WAWLFVLFVLPVIGFILYLFL). PLD phosphodiesterase domains lie at 225–252 (MNNRNHRKIIIIDGQIGYVGGFNVGDDY) and 403–430 (QNGFIHSKILMIDDEISSIGSANMDFRS). Catalysis depends on residues His-230, Lys-232, Asp-237, His-408, Lys-410, and Asp-415.

This sequence belongs to the phospholipase D family. Cardiolipin synthase subfamily.

The protein localises to the cell membrane. It catalyses the reaction 2 a 1,2-diacyl-sn-glycero-3-phospho-(1'-sn-glycerol) = a cardiolipin + glycerol. Its function is as follows. Catalyzes the reversible phosphatidyl group transfer from one phosphatidylglycerol molecule to another to form cardiolipin (CL) (diphosphatidylglycerol) and glycerol. In Staphylococcus epidermidis (strain ATCC 12228 / FDA PCI 1200), this protein is Cardiolipin synthase 1 (cls1).